We begin with the raw amino-acid sequence, 85 residues long: Large ribosomal subunit protein bL27 (85 aa).

Positions 1–20 (MATKKAGGSTRNGRDSEAKR) are disordered.

This sequence belongs to the bacterial ribosomal protein bL27 family.

The polypeptide is Large ribosomal subunit protein bL27 (Haemophilus influenzae (strain PittEE)).